Here is a 522-residue protein sequence, read N- to C-terminus: Gypsy retrotransposon integrase-like protein 1 (522 aa).

Positions Lys-135–Asn-292 constitute an Integrase catalytic domain.

The polypeptide is Gypsy retrotransposon integrase-like protein 1 (GIN1) (Macaca fascicularis (Crab-eating macaque)).